Here is a 382-residue protein sequence, read N- to C-terminus: 1-deoxy-D-xylulose 5-phosphate reductoisomerase (382 aa).

Residues T10, G11, S12, I13, G36, and N122 each coordinate NADPH. A 1-deoxy-D-xylulose 5-phosphate-binding site is contributed by K123. E124 contacts NADPH. D148 serves as a coordination point for Mn(2+). 1-deoxy-D-xylulose 5-phosphate-binding residues include S149, E150, S174, and H197. E150 is a Mn(2+) binding site. G203 is a binding site for NADPH. 1-deoxy-D-xylulose 5-phosphate contacts are provided by S210, N215, K216, and E219. A Mn(2+)-binding site is contributed by E219.

Belongs to the DXR family. Mg(2+) is required as a cofactor. The cofactor is Mn(2+).

The enzyme catalyses 2-C-methyl-D-erythritol 4-phosphate + NADP(+) = 1-deoxy-D-xylulose 5-phosphate + NADPH + H(+). The protein operates within isoprenoid biosynthesis; isopentenyl diphosphate biosynthesis via DXP pathway; isopentenyl diphosphate from 1-deoxy-D-xylulose 5-phosphate: step 1/6. Functionally, catalyzes the NADPH-dependent rearrangement and reduction of 1-deoxy-D-xylulose-5-phosphate (DXP) to 2-C-methyl-D-erythritol 4-phosphate (MEP). This chain is 1-deoxy-D-xylulose 5-phosphate reductoisomerase, found in Prosthecochloris aestuarii (strain DSM 271 / SK 413).